Here is a 104-residue protein sequence, read N- to C-terminus: Large ribosomal subunit protein uL24 (104 aa).

It belongs to the universal ribosomal protein uL24 family. In terms of assembly, part of the 50S ribosomal subunit.

One of two assembly initiator proteins, it binds directly to the 5'-end of the 23S rRNA, where it nucleates assembly of the 50S subunit. Its function is as follows. One of the proteins that surrounds the polypeptide exit tunnel on the outside of the subunit. The protein is Large ribosomal subunit protein uL24 of Erwinia tasmaniensis (strain DSM 17950 / CFBP 7177 / CIP 109463 / NCPPB 4357 / Et1/99).